We begin with the raw amino-acid sequence, 383 residues long: NADH-quinone oxidoreductase subunit D 1 (383 aa).

This sequence belongs to the complex I 49 kDa subunit family. As to quaternary structure, NDH-1 is composed of 14 different subunits. Subunits NuoB, C, D, E, F, and G constitute the peripheral sector of the complex.

It is found in the cell membrane. The catalysed reaction is a quinone + NADH + 5 H(+)(in) = a quinol + NAD(+) + 4 H(+)(out). In terms of biological role, NDH-1 shuttles electrons from NADH, via FMN and iron-sulfur (Fe-S) centers, to quinones in the respiratory chain. The immediate electron acceptor for the enzyme in this species is believed to be a menaquinone. Couples the redox reaction to proton translocation (for every two electrons transferred, four hydrogen ions are translocated across the cytoplasmic membrane), and thus conserves the redox energy in a proton gradient. The polypeptide is NADH-quinone oxidoreductase subunit D 1 (Streptomyces coelicolor (strain ATCC BAA-471 / A3(2) / M145)).